Here is a 532-residue protein sequence, read N- to C-terminus: Phosphoenolpyruvate carboxykinase (ATP) (532 aa).

Substrate-binding residues include Arg-60, Tyr-194, and Lys-200. Residues Lys-200, His-219, and 237–245 (GLSGTGKTT) contribute to the ATP site. Mn(2+) contacts are provided by Lys-200 and His-219. Asp-258 contributes to the Mn(2+) binding site. ATP contacts are provided by Glu-286, Arg-324, and Thr-449. Arg-324 serves as a coordination point for substrate.

It belongs to the phosphoenolpyruvate carboxykinase (ATP) family. The cofactor is Mn(2+).

Its subcellular location is the cytoplasm. The catalysed reaction is oxaloacetate + ATP = phosphoenolpyruvate + ADP + CO2. It participates in carbohydrate biosynthesis; gluconeogenesis. Involved in the gluconeogenesis. Catalyzes the conversion of oxaloacetate (OAA) to phosphoenolpyruvate (PEP) through direct phosphoryl transfer between the nucleoside triphosphate and OAA. The chain is Phosphoenolpyruvate carboxykinase (ATP) from Paracoccus denitrificans (strain Pd 1222).